The following is a 371-amino-acid chain: Homoserine O-acetyltransferase (371 aa).

Residues 44-350 (NAILVEHAWT…SYGHDAFLLE (307 aa)) form the AB hydrolase-1 domain. Ser-150 serves as the catalytic Nucleophile. Substrate is bound at residue Arg-217. Residues Asp-311 and His-344 contribute to the active site. Asp-345 is a binding site for substrate.

Belongs to the AB hydrolase superfamily. MetX family. In terms of assembly, homodimer.

The protein localises to the cytoplasm. The catalysed reaction is L-homoserine + acetyl-CoA = O-acetyl-L-homoserine + CoA. It functions in the pathway amino-acid biosynthesis; L-methionine biosynthesis via de novo pathway; O-acetyl-L-homoserine from L-homoserine: step 1/1. Its function is as follows. Transfers an acetyl group from acetyl-CoA to L-homoserine, forming acetyl-L-homoserine. This is Homoserine O-acetyltransferase from Pelobacter propionicus (strain DSM 2379 / NBRC 103807 / OttBd1).